The chain runs to 103 residues: MSGRGKGGKGLGKGGAKRHRKVLRDNIQGITKPAIRRLARRGGVKRISGLIYEETRGVLKIFLENVIRDAVTYTEHARRKTVTAMDVVYALKRQGRTLYGFGG.

Over residues 1–14 (MSGRGKGGKGLGKG) the composition is skewed to gly residues. Residues 1–20 (MSGRGKGGKGLGKGGAKRHR) are disordered. At Ser-2 the chain carries N-acetylserine. Residue Lys-17 is modified to N6-acetyllysine. Residues 17–21 (KRHRK) mediate DNA binding. N6-methyllysine is present on Lys-21.

It belongs to the histone H4 family. As to quaternary structure, the nucleosome is a histone octamer containing two molecules each of H2A, H2B, H3 and H4 assembled in one H3-H4 heterotetramer and two H2A-H2B heterodimers. The octamer wraps approximately 147 bp of DNA.

It is found in the nucleus. Its subcellular location is the chromosome. Its function is as follows. Core component of nucleosome. Nucleosomes wrap and compact DNA into chromatin, limiting DNA accessibility to the cellular machineries which require DNA as a template. Histones thereby play a central role in transcription regulation, DNA repair, DNA replication and chromosomal stability. DNA accessibility is regulated via a complex set of post-translational modifications of histones, also called histone code, and nucleosome remodeling. The protein is Histone H4 of Eucalyptus globulus (Tasmanian blue gum).